Consider the following 1079-residue polypeptide: Psi-producing oxygenase A (1079 aa).

Residues 105–446 (TNTFLTTLWN…DGSYDDNDLV (342 aa)) are linoleate 8R-lipoxygenase. Histidine 202 provides a ligand contact to heme b. Residue tyrosine 374 is part of the active site. Position 377 (histidine 377) interacts with heme b. The interval 654–1079 (QFINSHSACM…WDGDLPEVKE (426 aa)) is 9,12-octadecadienoate 8-hydroperoxide 8R-isomerase.

It belongs to the peroxidase family. In terms of assembly, homotetramer. It depends on heme b as a cofactor.

It carries out the reaction (9Z,12Z)-octadecadienoate + O2 = (8R,9Z,12Z)-8-hydroperoxyoctadeca-9,12-dienoate. It catalyses the reaction (8R,9Z,12Z)-8-hydroperoxyoctadeca-9,12-dienoate = (5S,8R,9Z,12Z)-5,8-dihydroxyoctadeca-9,12-dienoate. Bifunctional heme-containing enzyme that oxidizes linoleic acid to (8R,9Z,12Z)-8-hydroperoxyoctadeca-9,12-dienoate (within the N-terminal heme peroxidase domain), which is subsequently isomerized to (5S,8R,9Z,12Z)-5,8-dihydroxyoctadeca-9,12-dienoate (within the C-terminal P450 heme thiolate domain). Oxidized unsaturated fatty acids, so-called oxylipins, derived from endogenous fatty acids, influence the development of the asexual conidiophores and sexual cleistothecia and regulate the secondary metabolism. These substances were collectively named psi factors and are primarily a mixture of hydroxylated oleic, linoleic and alpha-linolenic acids. They are termed psi-beta, psi-alpha, and psi-gamma, respectively. Oxylipins may also serve as activators of mammalian immune responses contributing to enhanced resistance to opportunistic fungi and as factors that modulate fungal development contributing to resistance to host defenses. The protein is Psi-producing oxygenase A (ppoA) of Aspergillus fumigatus (strain ATCC MYA-4609 / CBS 101355 / FGSC A1100 / Af293) (Neosartorya fumigata).